The following is a 351-amino-acid chain: O-methyltransferase apf6 (351 aa).

Residues 231 to 232 (GG), 279 to 280 (NF), and R295 contribute to the S-adenosyl-L-methionine site. Catalysis depends on H299, which acts as the Proton acceptor.

Belongs to the class I-like SAM-binding methyltransferase superfamily. Cation-independent O-methyltransferase family.

It participates in secondary metabolite biosynthesis. Its function is as follows. O-methyltransferase; part of the gene cluster that mediates the biosynthesis of the cyclic tetrapeptide apicidin F (APF). The non-ribosomal peptide synthetase apf1 incorporates four different amino acids to produce apicidin F: L-phenylalanine, D-pipecolic acid (D-pip), N-methoxy-L-tryptophan and L-2-aminooctanedioic acid. L-Phenylalanine is the only proteinogenic amino acid directly used by apf1. The 3 other apf1 substrates are non-proteinogenic and have to be modified by other enzymes of the cluster. Lysine is converted to delta-1-pyrroline-5-carboxylate (P5C) which is reduced to L-pipecolic acid (L-pip) by apf3. L-pip is epimerized to D-pip, probably by apf1 activity, prior to incorporation. L-Tryptophan is N-oxidyzed by one of the cytochrome P450 monooxygenases (apf7 or apf8), and further methylated at the hydroxy group by the O-methyltransferase apf6 to yield N-methoxy-L-tryptophan. The synthesis of the fourth apf1 substrate is more complex. The fatty acid synthase apf5 is involved in the synthesis of the octanoic acid backbone of L-2-aminooctanedioic acid by fixing one acetyl-CoA unit and three malonyl-CoA units. Then one of the cytochrome P450 monooxygenases (apf7 or apf8) may oxidize this backbone to 2-oxooctanoic acid. The aminotransferase apf4 is predicted to catalyze the exchange of the keto group with an amino group. The next step would be the oxidation of 2-aminooctanoic acid by one of the cytochrome P450 monooxygenases (apf7 or apf8). The last step is the oxidation of 2-amino-8-hydroxyoctanoic acid to 2-aminooctanedioic acid is catalyzed by the FAD-dependent monooxygenase apf9. This Gibberella fujikuroi (strain CBS 195.34 / IMI 58289 / NRRL A-6831) (Bakanae and foot rot disease fungus) protein is O-methyltransferase apf6.